Reading from the N-terminus, the 222-residue chain is Thiamine-phosphate synthase (222 aa).

4-amino-2-methyl-5-(diphosphooxymethyl)pyrimidine contacts are provided by residues 40 to 44 (QLRDK) and N81. Mg(2+)-binding residues include D82 and D101. S120 is a binding site for 4-amino-2-methyl-5-(diphosphooxymethyl)pyrimidine. 146–148 (TPT) is a binding site for 2-[(2R,5Z)-2-carboxy-4-methylthiazol-5(2H)-ylidene]ethyl phosphate. K149 provides a ligand contact to 4-amino-2-methyl-5-(diphosphooxymethyl)pyrimidine. Position 178 (G178) interacts with 2-[(2R,5Z)-2-carboxy-4-methylthiazol-5(2H)-ylidene]ethyl phosphate.

The protein belongs to the thiamine-phosphate synthase family. Mg(2+) is required as a cofactor.

The catalysed reaction is 2-[(2R,5Z)-2-carboxy-4-methylthiazol-5(2H)-ylidene]ethyl phosphate + 4-amino-2-methyl-5-(diphosphooxymethyl)pyrimidine + 2 H(+) = thiamine phosphate + CO2 + diphosphate. It catalyses the reaction 2-(2-carboxy-4-methylthiazol-5-yl)ethyl phosphate + 4-amino-2-methyl-5-(diphosphooxymethyl)pyrimidine + 2 H(+) = thiamine phosphate + CO2 + diphosphate. It carries out the reaction 4-methyl-5-(2-phosphooxyethyl)-thiazole + 4-amino-2-methyl-5-(diphosphooxymethyl)pyrimidine + H(+) = thiamine phosphate + diphosphate. The protein operates within cofactor biosynthesis; thiamine diphosphate biosynthesis; thiamine phosphate from 4-amino-2-methyl-5-diphosphomethylpyrimidine and 4-methyl-5-(2-phosphoethyl)-thiazole: step 1/1. Condenses 4-methyl-5-(beta-hydroxyethyl)thiazole monophosphate (THZ-P) and 2-methyl-4-amino-5-hydroxymethyl pyrimidine pyrophosphate (HMP-PP) to form thiamine monophosphate (TMP). The chain is Thiamine-phosphate synthase from Mycobacterium tuberculosis (strain ATCC 25177 / H37Ra).